The following is a 156-amino-acid chain: Small ribosomal subunit protein uS7 (156 aa).

The protein belongs to the universal ribosomal protein uS7 family. Part of the 30S ribosomal subunit. Contacts proteins S9 and S11.

One of the primary rRNA binding proteins, it binds directly to 16S rRNA where it nucleates assembly of the head domain of the 30S subunit. Is located at the subunit interface close to the decoding center, probably blocks exit of the E-site tRNA. In Pseudomonas syringae pv. syringae (strain B728a), this protein is Small ribosomal subunit protein uS7.